A 197-amino-acid chain; its full sequence is 3-isopropylmalate dehydratase small subunit (197 aa).

Belongs to the LeuD family. LeuD type 1 subfamily. As to quaternary structure, heterodimer of LeuC and LeuD.

It carries out the reaction (2R,3S)-3-isopropylmalate = (2S)-2-isopropylmalate. The protein operates within amino-acid biosynthesis; L-leucine biosynthesis; L-leucine from 3-methyl-2-oxobutanoate: step 2/4. Catalyzes the isomerization between 2-isopropylmalate and 3-isopropylmalate, via the formation of 2-isopropylmaleate. The protein is 3-isopropylmalate dehydratase small subunit of Corynebacterium glutamicum (strain R).